The sequence spans 438 residues: Minor capsid protein p49 (438 aa).

The disordered stretch occupies residues 134-167 (PQVSGLKDTQKNCLTQPSSLPSLKNPKNSSVPST). Over residues 144-167 (KNCLTQPSSLPSLKNPKNSSVPST) the composition is skewed to polar residues.

This sequence belongs to the asfivirus p49 structural protein family.

The protein localises to the virion. In terms of biological role, together with the penton and the other minor capsid proteins (M1249L, p17), forms a complicated network immediately below the outer capsid shell, stabilizing the whole capsid. Plays an essential role in the formation of infectious virus particles. Especially required for the formation of the capsid vertices. During virion assembly, associates with the membrane and probably mediates the docking of the penton complex to the inner membrane, where it recruits the capsomers to form the penton core. This is Minor capsid protein p49 from Ornithodoros (relapsing fever ticks).